Consider the following 220-residue polypeptide: Deoxyribose-phosphate aldolase (220 aa).

Asp89 (proton donor/acceptor) is an active-site residue. Lys151 (schiff-base intermediate with acetaldehyde) is an active-site residue. The active-site Proton donor/acceptor is the Lys180.

Belongs to the DeoC/FbaB aldolase family. DeoC type 1 subfamily.

The protein resides in the cytoplasm. The catalysed reaction is 2-deoxy-D-ribose 5-phosphate = D-glyceraldehyde 3-phosphate + acetaldehyde. Its pathway is carbohydrate degradation; 2-deoxy-D-ribose 1-phosphate degradation; D-glyceraldehyde 3-phosphate and acetaldehyde from 2-deoxy-alpha-D-ribose 1-phosphate: step 2/2. Functionally, catalyzes a reversible aldol reaction between acetaldehyde and D-glyceraldehyde 3-phosphate to generate 2-deoxy-D-ribose 5-phosphate. This is Deoxyribose-phosphate aldolase from Streptococcus pneumoniae (strain 70585).